We begin with the raw amino-acid sequence, 300 residues long: Ribosomal protein L11 methyltransferase (300 aa).

The S-adenosyl-L-methionine site is built by threonine 152, glycine 173, aspartate 195, and asparagine 234.

Belongs to the methyltransferase superfamily. PrmA family.

The protein resides in the cytoplasm. It catalyses the reaction L-lysyl-[protein] + 3 S-adenosyl-L-methionine = N(6),N(6),N(6)-trimethyl-L-lysyl-[protein] + 3 S-adenosyl-L-homocysteine + 3 H(+). Its function is as follows. Methylates ribosomal protein L11. This Burkholderia cenocepacia (strain HI2424) protein is Ribosomal protein L11 methyltransferase.